Here is a 931-residue protein sequence, read N- to C-terminus: MASPPRGWGCGELLLPFMLLGTLCEPGSGQIRYSMPEELDKGSFVGNIAKDLGLEPQELAERGVRIVSRGRTQLFALNPRSGSLVTAGRIDREELCAQSPLCVVNFNILVENKMKIYGVEVEIIDINDNFPRFRDEELKVKVNENAAAGTRLVLPFARDADVGVNSLRSYQLSSNLHFSLDVVSGTDGQKYPELVLEQPLDREKETVHDLLLTALDGGDPVLSGTTHIRVTVLDANDNAPLFTPSEYSVSVPENIPVGTRLLMLTATDPDEGINGKLTYSFRNEEEKISETFQLDSNLGEISTLQSLDYEESRFYLMEVVAQDGGALVASAKVVVTVQDVNDNAPEVILTSLTSSISEDCLPGTVIALFSVHDGDSGENGEIACSIPRNLPFKLEKSVDNYYHLLTTRDLDREETSDYNITLTVMDHGTPPLSTESHIPLKVADVNDNPPNFPQASYSTSVTENNPRGVSIFSVTAHDPDSGDNARVTYSLAEDTFQGAPLSSYVSINSDTGVLYALRSFDYEQLRDLQLWVTASDSGNPPLSSNVSLSLFVLDQNDNTPEILYPALPTDGSTGVELAPRSAEPGYLVTKVVAVDKDSGQNAWLSYRLLKASEPGLFAVGLHTGEVRTARALLDRDALKQSLVVAVEDHGQPPLSATFTVTVAVADRIPDILADLGSIKTPIDPEDLDLTLYLVVAVAAVSCVFLAFVIVLLVLRLRRWHKSRLLQAEGSRLAGVPASHFVGVDGVRAFLQTYSHEVSLTADSRKSHLIFPQPNYADTLLSEESCEKSEPLLMSDKVDANKEERRVQQAPPNTDWRFSQAQRPGTSGSQNGDDTGTWPNNQFDTEMLQAMILASASEAADGSSTLGGGAGTMGLSARYGPQFTLQHVPDYRQNVYIPGSNATLTNAAGKRDGKAPAGGNGNKKKSGKKEKK.

Residues 1–29 (MASPPRGWGCGELLLPFMLLGTLCEPGSG) form the signal peptide. 6 consecutive Cadherin domains span residues 30–133 (QIRY…FPRF), 134–242 (RDEE…APLF), 243–347 (TPSE…APEV), 348–452 (ILTS…PPNF), 453–562 (PQAS…TPEI), and 570–683 (DGST…TPID). Residues 30 to 692 (QIRYSMPEEL…DPEDLDLTLY (663 aa)) lie on the Extracellular side of the membrane. N-linked (GlcNAc...) asparagine glycans are attached at residues Asn419 and Asn545. Residues 693–713 (LVVAVAAVSCVFLAFVIVLLV) traverse the membrane as a helical segment. Residues 714 to 931 (LRLRRWHKSR…KKKSGKKEKK (218 aa)) are Cytoplasmic-facing. Disordered stretches follow at residues 800–840 (NKEE…WPNN) and 901–931 (ATLTNAAGKRDGKAPAGGNGNKKKSGKKEKK). Residues 809–840 (APPNTDWRFSQAQRPGTSGSQNGDDTGTWPNN) are compositionally biased toward polar residues. Over residues 921–931 (NKKKSGKKEKK) the composition is skewed to basic residues.

The protein resides in the cell membrane. Potential calcium-dependent cell-adhesion protein. May be involved in the establishment and maintenance of specific neuronal connections in the brain. In Homo sapiens (Human), this protein is Protocadherin gamma-A5 (PCDHGA5).